Consider the following 323-residue polypeptide: Lipoyl synthase (323 aa).

7 residues coordinate [4Fe-4S] cluster: C61, C66, C72, C87, C91, C94, and S300. Residues W73 to L289 enclose the Radical SAM core domain.

It belongs to the radical SAM superfamily. Lipoyl synthase family. It depends on [4Fe-4S] cluster as a cofactor.

It localises to the cytoplasm. It carries out the reaction [[Fe-S] cluster scaffold protein carrying a second [4Fe-4S](2+) cluster] + N(6)-octanoyl-L-lysyl-[protein] + 2 oxidized [2Fe-2S]-[ferredoxin] + 2 S-adenosyl-L-methionine + 4 H(+) = [[Fe-S] cluster scaffold protein] + N(6)-[(R)-dihydrolipoyl]-L-lysyl-[protein] + 4 Fe(3+) + 2 hydrogen sulfide + 2 5'-deoxyadenosine + 2 L-methionine + 2 reduced [2Fe-2S]-[ferredoxin]. It participates in protein modification; protein lipoylation via endogenous pathway; protein N(6)-(lipoyl)lysine from octanoyl-[acyl-carrier-protein]: step 2/2. Catalyzes the radical-mediated insertion of two sulfur atoms into the C-6 and C-8 positions of the octanoyl moiety bound to the lipoyl domains of lipoate-dependent enzymes, thereby converting the octanoylated domains into lipoylated derivatives. The polypeptide is Lipoyl synthase (Sinorhizobium medicae (strain WSM419) (Ensifer medicae)).